The chain runs to 437 residues: Bile acid CoA-transferase BaiK (437 aa).

The active-site Nucleophile is Asp-171.

Belongs to the CoA-transferase III family.

The enzyme catalyses deoxycholoyl-CoA + cholate = choloyl-CoA + deoxycholate. It carries out the reaction allodeoxycholoyl-CoA + cholate = allodeoxycholate + choloyl-CoA. The catalysed reaction is allocholate + deoxycholoyl-CoA = allocholoyl-CoA + deoxycholate. It catalyses the reaction allocholate + allodeoxycholoyl-CoA = allocholoyl-CoA + allodeoxycholate. The enzyme catalyses ursodeoxycholate + deoxycholoyl-CoA = ursodeoxycholoyl-CoA + deoxycholate. It carries out the reaction allodeoxycholoyl-CoA + ursodeoxycholate = ursodeoxycholoyl-CoA + allodeoxycholate. It participates in lipid metabolism; bile acid biosynthesis. Its function is as follows. Functions in the bile acid 7alpha-dehydroxylation pathway, which forms secondary bile acids via the 7alpha-dehydroxylation of primary bile acids, and is carried out by intestinal anaerobic bacteria. Acts as a bile acid CoA transferase with broad bile acid substrate specificity. Catalyzes the transfer of the CoA moiety of secondary bile acid-CoA compounds to primary bile acids. Can use deoxycholoyl-CoA and allodeoxycholoyl-CoA as bile acid CoA donors and cholate, allocholate and ursodeoxycholate as bile acid CoA acceptors. Shows no activity when lithocholoyl-CoA is used as the CoA donor. This Clostridium scindens (strain JCM 10418 / VPI 12708) protein is Bile acid CoA-transferase BaiK.